We begin with the raw amino-acid sequence, 375 residues long: Homeobox protein Meis3 (375 aa).

Positions 25–51 (PETVPAVPGPYGPHRPPQPLPPGLDSD) are disordered. Residues 31–46 (VPGPYGPHRPPQPLPP) are compositionally biased toward pro residues. Positions 96-179 (GGDVCSSDSF…PIDLVIEDRD (84 aa)) constitute an MEIS N-terminal domain. Disordered stretches follow at residues 197–268 (PDQN…KRGI) and 329–348 (NRTG…GGYT). Residues 227–241 (SQSGDNSSDQGDGLD) are compositionally biased toward low complexity. A DNA-binding region (homeobox; TALE-type) is located at residues 262–324 (RNKKRGIFPK…NARRRIVQPM (63 aa)).

It belongs to the TALE/MEIS homeobox family.

The protein resides in the nucleus. Its function is as follows. Transcriptional regulator which directly modulates PDPK1 expression, thus promoting survival of pancreatic beta-cells. Also regulates expression of NDFIP1, BNIP3, and CCNG1. The polypeptide is Homeobox protein Meis3 (MEIS3) (Homo sapiens (Human)).